Here is a 699-residue protein sequence, read N- to C-terminus: uncharacterized protein (699 aa).

Disordered stretches follow at residues 175-208 (PTLG…ASLS), 289-364 (PTAK…EEPD), and 539-603 (RAKE…KEYL). Residues 183–194 (PSKHGDHSDSKT) are compositionally biased toward basic and acidic residues. A compositionally biased stretch (polar residues) spans 195 to 208 (YESPISNSQAASLS). The span at 308 to 322 (SKHKKRPKRLSKFKQ) shows a compositional bias: basic residues. Basic and acidic residues predominate over residues 323–338 (AKLETKKSGNKDHATS). Polar residues-rich tracts occupy residues 339-360 (SEKL…SSSI) and 548-573 (HSNA…NTKL). Over residues 574–603 (NPKEEDKSTVESELKAPPKEKSSETSKEYL) the composition is skewed to basic and acidic residues.

The protein localises to the cytoplasm. This is an uncharacterized protein from Schizosaccharomyces pombe (strain 972 / ATCC 24843) (Fission yeast).